We begin with the raw amino-acid sequence, 1299 residues long: Tubulin polyglutamylase TTLL5 (1299 aa).

Residues 62–407 (RYHLSYKIVR…VCQDPAQRAS (346 aa)) enclose the TTL domain. Residues Lys-180, 186–187 (RG), 208–211 (SRYI), and 221–223 (KFD) contribute to the ATP site. Arg-186 lines the a protein pocket. Arg-247 provides a ligand contact to L-glutamate. 268-269 (TN) is a binding site for ATP. L-glutamate-binding residues include Tyr-270, Ser-271, and Lys-293. 3 residues coordinate Mg(2+): Asp-353, Glu-366, and Asn-368. The c-MTBD region stretch occupies residues 378-488 (PLDLKIKASM…RGGFIRIFPT (111 aa)). Lys-384 contacts L-glutamate. Disordered regions lie at residues 589 to 626 (EMNV…FLRE), 832 to 853 (GTHS…KGDH), 918 to 941 (SSVT…IPSA), 1088 to 1130 (RSSA…RSLQ), and 1217 to 1275 (SSAT…QLNG). Positions 597-617 (ESEEEEEVALDNEEEEQEASQ) are enriched in acidic residues. The span at 838-847 (SKNNNSYSDS) shows a compositional bias: low complexity. 3 stretches are compositionally biased toward polar residues: residues 1104-1130 (SGPT…RSLQ), 1217-1230 (SSAT…TTLP), and 1258-1275 (ATSQ…QLNG).

The protein belongs to the tubulin--tyrosine ligase family. As to quaternary structure, interacts with the transcriptional coactivators NCOA1/SRC-1 and NCOA2/TIF2. Mg(2+) serves as cofactor.

It localises to the cell projection. Its subcellular location is the cilium. The protein resides in the cytoplasm. It is found in the cytoskeleton. The protein localises to the cilium basal body. It localises to the nucleus. The enzyme catalyses L-glutamyl-[protein] + L-glutamate + ATP = gamma-L-glutamyl-L-glutamyl-[protein] + ADP + phosphate + H(+). The catalysed reaction is (L-glutamyl)(n)-gamma-L-glutamyl-L-glutamyl-[protein] + L-glutamate + ATP = (L-glutamyl)(n+1)-gamma-L-glutamyl-L-glutamyl-[protein] + ADP + phosphate + H(+). Its function is as follows. Polyglutamylase which modifies tubulin, generating polyglutamate side chains on the gamma-carboxyl group of specific glutamate residues within the C-terminal tail of tubulin. Preferentially mediates ATP-dependent initiation step of the polyglutamylation reaction over the elongation step. Preferentially modifies the alpha-tubulin tail over a beta-tail. Required for CCSAP localization to both polyglutamylated spindle and cilia microtubules. Increases the effects of transcriptional coactivator NCOA2/TIF2 in glucocorticoid receptor-mediated repression and induction and in androgen receptor-mediated induction. This chain is Tubulin polyglutamylase TTLL5 (TTLL5), found in Pongo abelii (Sumatran orangutan).